Reading from the N-terminus, the 411-residue chain is Arginine deiminase (411 aa).

The active-site Amidino-cysteine intermediate is the cysteine 401.

This sequence belongs to the arginine deiminase family. Glycosylated.

The protein resides in the cytoplasm. The enzyme catalyses L-arginine + H2O = L-citrulline + NH4(+). Its pathway is amino-acid degradation; L-arginine degradation via ADI pathway; carbamoyl phosphate from L-arginine: step 1/2. The chain is Arginine deiminase from Streptococcus pyogenes serotype M3 (strain ATCC BAA-595 / MGAS315).